A 1015-amino-acid polypeptide reads, in one-letter code: Putative helicase mov-10-B.2 (1015 aa).

Positions 94–130 (QWFRPRRRQQNQANATPGNVSSVTPSSDQGPSCPESG) are disordered. Polar residues predominate over residues 109-123 (TPGNVSSVTPSSDQG). 555-562 (GPPGTGKT) is a binding site for ATP. The DEAG box motif lies at 677 to 680 (DEAG).

Belongs to the DNA2/NAM7 helicase family. SDE3 subfamily.

The protein resides in the cytoplasm. Its subcellular location is the P-body. It catalyses the reaction ATP + H2O = ADP + phosphate + H(+). Functionally, probable RNA helicase. Required for RNA-mediated gene silencing by the RNA-induced silencing complex (RISC). Required for both miRNA-mediated translational repression and miRNA-mediated cleavage of complementary mRNAs by RISC. The protein is Putative helicase mov-10-B.2 (mov10b.2) of Danio rerio (Zebrafish).